The chain runs to 269 residues: Formamidopyrimidine-DNA glycosylase (269 aa).

P2 (schiff-base intermediate with DNA) is an active-site residue. E3 serves as the catalytic Proton donor. The active-site Proton donor; for beta-elimination activity is K57. Positions 90, 109, and 150 each coordinate DNA. The FPG-type zinc finger occupies Q235 to K269. R259 (proton donor; for delta-elimination activity) is an active-site residue.

The protein belongs to the FPG family. As to quaternary structure, monomer. Zn(2+) serves as cofactor.

The enzyme catalyses Hydrolysis of DNA containing ring-opened 7-methylguanine residues, releasing 2,6-diamino-4-hydroxy-5-(N-methyl)formamidopyrimidine.. The catalysed reaction is 2'-deoxyribonucleotide-(2'-deoxyribose 5'-phosphate)-2'-deoxyribonucleotide-DNA = a 3'-end 2'-deoxyribonucleotide-(2,3-dehydro-2,3-deoxyribose 5'-phosphate)-DNA + a 5'-end 5'-phospho-2'-deoxyribonucleoside-DNA + H(+). Its function is as follows. Involved in base excision repair of DNA damaged by oxidation or by mutagenic agents. Acts as a DNA glycosylase that recognizes and removes damaged bases. Has a preference for oxidized purines, such as 7,8-dihydro-8-oxoguanine (8-oxoG). Has AP (apurinic/apyrimidinic) lyase activity and introduces nicks in the DNA strand. Cleaves the DNA backbone by beta-delta elimination to generate a single-strand break at the site of the removed base with both 3'- and 5'-phosphates. In Escherichia coli O6:H1 (strain CFT073 / ATCC 700928 / UPEC), this protein is Formamidopyrimidine-DNA glycosylase.